A 198-amino-acid polypeptide reads, in one-letter code: ATP-dependent Clp protease proteolytic subunit (198 aa).

The active-site Nucleophile is the S103. The active site involves H128.

This sequence belongs to the peptidase S14 family. Fourteen ClpP subunits assemble into 2 heptameric rings which stack back to back to give a disk-like structure with a central cavity, resembling the structure of eukaryotic proteasomes.

Its subcellular location is the cytoplasm. The enzyme catalyses Hydrolysis of proteins to small peptides in the presence of ATP and magnesium. alpha-casein is the usual test substrate. In the absence of ATP, only oligopeptides shorter than five residues are hydrolyzed (such as succinyl-Leu-Tyr-|-NHMec, and Leu-Tyr-Leu-|-Tyr-Trp, in which cleavage of the -Tyr-|-Leu- and -Tyr-|-Trp bonds also occurs).. In terms of biological role, cleaves peptides in various proteins in a process that requires ATP hydrolysis. Has a chymotrypsin-like activity. Plays a major role in the degradation of misfolded proteins. The polypeptide is ATP-dependent Clp protease proteolytic subunit (Vesicomyosocius okutanii subsp. Calyptogena okutanii (strain HA)).